A 105-amino-acid chain; its full sequence is Large ribosomal subunit protein bL21 (105 aa).

Belongs to the bacterial ribosomal protein bL21 family. Part of the 50S ribosomal subunit. Contacts protein L20.

Its function is as follows. This protein binds to 23S rRNA in the presence of protein L20. The sequence is that of Large ribosomal subunit protein bL21 from Rhizobium etli (strain CIAT 652).